The following is a 436-amino-acid chain: MGQVLPLVTRQGDRIAIVSGLRTPFARQATAFHGIPAVDLGKMVVGELLARTEIPAEVIEQLVFGQVVQMPEAPNIAREIVLGTGMNVHTDAYSVSRACATSFQAVANVAESLMAGTIRAGIAGGADSSSVLPIGVSKKLARVLVDVNKARTMSQRLKLFSRLRLRDLMPVPPAVAEYSTGLRMGDTAEQMAKTYGITREQQDALAHRSHQRAAQAWSEGKLKEEVMTAFIPPYKQPLVEDNNIRGNSSLADYAKLRPAFDRKHGTVTAANSTPLTDGAAAVILMTESRAKELGLVPLGYLRSYAFTAIDVWQDMLLGPAWSTPLALERAGLTMGDLTLIDMHEAFAAQTLANIQLLGSERFARDVLGRAHATGEVDESKFNVLGGSIAYGHPFAATGARMITQTLHELRRRGGGFGLVTACAAGGLGAAMVLEAE.

Cysteine 99 (acyl-thioester intermediate) is an active-site residue. Active-site proton acceptor residues include histidine 392 and cysteine 422.

This sequence belongs to the thiolase-like superfamily. Thiolase family. As to quaternary structure, heterotetramer of two alpha chains (FadJ) and two beta chains (FadI).

Its subcellular location is the cytoplasm. It carries out the reaction an acyl-CoA + acetyl-CoA = a 3-oxoacyl-CoA + CoA. It participates in lipid metabolism; fatty acid beta-oxidation. Functionally, catalyzes the final step of fatty acid oxidation in which acetyl-CoA is released and the CoA ester of a fatty acid two carbons shorter is formed. The chain is 3-ketoacyl-CoA thiolase from Escherichia coli O1:K1 / APEC.